Consider the following 286-residue polypeptide: Phosphatidylserine decarboxylase proenzyme (286 aa).

Catalysis depends on charge relay system; for autoendoproteolytic cleavage activity residues D90, H147, and S252. The active-site Schiff-base intermediate with substrate; via pyruvic acid; for decarboxylase activity is S252. A Pyruvic acid (Ser); by autocatalysis modification is found at S252.

The protein belongs to the phosphatidylserine decarboxylase family. PSD-B subfamily. Prokaryotic type I sub-subfamily. As to quaternary structure, heterodimer of a large membrane-associated beta subunit and a small pyruvoyl-containing alpha subunit. Requires pyruvate as cofactor. Post-translationally, is synthesized initially as an inactive proenzyme. Formation of the active enzyme involves a self-maturation process in which the active site pyruvoyl group is generated from an internal serine residue via an autocatalytic post-translational modification. Two non-identical subunits are generated from the proenzyme in this reaction, and the pyruvate is formed at the N-terminus of the alpha chain, which is derived from the carboxyl end of the proenzyme. The autoendoproteolytic cleavage occurs by a canonical serine protease mechanism, in which the side chain hydroxyl group of the serine supplies its oxygen atom to form the C-terminus of the beta chain, while the remainder of the serine residue undergoes an oxidative deamination to produce ammonia and the pyruvoyl prosthetic group on the alpha chain. During this reaction, the Ser that is part of the protease active site of the proenzyme becomes the pyruvoyl prosthetic group, which constitutes an essential element of the active site of the mature decarboxylase.

The protein localises to the cell membrane. It carries out the reaction a 1,2-diacyl-sn-glycero-3-phospho-L-serine + H(+) = a 1,2-diacyl-sn-glycero-3-phosphoethanolamine + CO2. It participates in phospholipid metabolism; phosphatidylethanolamine biosynthesis; phosphatidylethanolamine from CDP-diacylglycerol: step 2/2. Its function is as follows. Catalyzes the formation of phosphatidylethanolamine (PtdEtn) from phosphatidylserine (PtdSer). The chain is Phosphatidylserine decarboxylase proenzyme from Azotobacter vinelandii (strain DJ / ATCC BAA-1303).